The chain runs to 386 residues: S-adenosylmethionine synthase (386 aa).

Position 16 (His-16) interacts with ATP. Asp-18 contacts Mg(2+). K(+) is bound at residue Glu-44. Glu-57 and Gln-100 together coordinate L-methionine. The segment at 100–110 is flexible loop; sequence QSGDIAMGVDE. Residues 165–167, Asp-240, 246–247, Ala-263, and Lys-267 each bind ATP; these read DAK and RK. Residue Asp-240 coordinates L-methionine. An L-methionine-binding site is contributed by Lys-271.

It belongs to the AdoMet synthase family. Homotetramer; dimer of dimers. The cofactor is Mg(2+). Requires K(+) as cofactor.

It localises to the cytoplasm. It catalyses the reaction L-methionine + ATP + H2O = S-adenosyl-L-methionine + phosphate + diphosphate. Its pathway is amino-acid biosynthesis; S-adenosyl-L-methionine biosynthesis; S-adenosyl-L-methionine from L-methionine: step 1/1. Its function is as follows. Catalyzes the formation of S-adenosylmethionine (AdoMet) from methionine and ATP. The overall synthetic reaction is composed of two sequential steps, AdoMet formation and the subsequent tripolyphosphate hydrolysis which occurs prior to release of AdoMet from the enzyme. This Hahella chejuensis (strain KCTC 2396) protein is S-adenosylmethionine synthase.